Consider the following 298-residue polypeptide: Proline iminopeptidase (298 aa).

The AB hydrolase-1 domain maps to 26 to 277 (VLLLHGGPAM…NGSHLAMWDD (252 aa)). Ser-103 (nucleophile) is an active-site residue. The active site involves Asp-244. The Proton donor role is filled by His-271.

It belongs to the peptidase S33 family. As to quaternary structure, monomer.

The enzyme catalyses Release of N-terminal proline from a peptide.. Functionally, releases the N-terminal proline from various substrates. Cleaves specifically Pro-betaNA and small peptides containing proline at the amino terminal. No activity against hydroxyproline-betaNA. This Elizabethkingia meningoseptica (Chryseobacterium meningosepticum) protein is Proline iminopeptidase (fpaP).